Reading from the N-terminus, the 62-residue chain is Histone H1.2, embryonic (62 aa).

The 53-residue stretch at 1–53 (HVVAAITALKERGGSSMKKQSVFIKKALKSGVEKGTLVQVKGKGASGSFKLGK) folds into the H15 domain.

The protein belongs to the histone H1/H5 family.

It is found in the nucleus. Its subcellular location is the chromosome. In terms of biological role, histones H1 are necessary for the condensation of nucleosome chains into higher-order structures. This Parechinus angulosus (Angulate sea urchin) protein is Histone H1.2, embryonic.